The following is a 517-amino-acid chain: Bifunctional purine biosynthesis protein PurH (517 aa).

Positions 1–145 constitute an MGS-like domain; the sequence is MSPLALVSVS…KNHKDVSVLV (145 aa).

The protein belongs to the PurH family.

The enzyme catalyses (6R)-10-formyltetrahydrofolate + 5-amino-1-(5-phospho-beta-D-ribosyl)imidazole-4-carboxamide = 5-formamido-1-(5-phospho-D-ribosyl)imidazole-4-carboxamide + (6S)-5,6,7,8-tetrahydrofolate. The catalysed reaction is IMP + H2O = 5-formamido-1-(5-phospho-D-ribosyl)imidazole-4-carboxamide. It participates in purine metabolism; IMP biosynthesis via de novo pathway; 5-formamido-1-(5-phospho-D-ribosyl)imidazole-4-carboxamide from 5-amino-1-(5-phospho-D-ribosyl)imidazole-4-carboxamide (10-formyl THF route): step 1/1. It functions in the pathway purine metabolism; IMP biosynthesis via de novo pathway; IMP from 5-formamido-1-(5-phospho-D-ribosyl)imidazole-4-carboxamide: step 1/1. The chain is Bifunctional purine biosynthesis protein PurH from Prochlorococcus marinus subsp. pastoris (strain CCMP1986 / NIES-2087 / MED4).